Here is a 56-residue protein sequence, read N- to C-terminus: Defensin-1 (56 aa).

A signal peptide spans 1-24 (MKAIVVLLILALILCLYAMTTVEG). Intrachain disulfides connect Cys26-Cys45, Cys31-Cys53, and Cys35-Cys55.

It is found in the secreted. Antibacterial protein involved in the immune response to septic injury. When combined with 14.026 kDa and 14.059 kDa hemolymph antimicrobial peptides, it has a strong cooperative activity against the Gram-positive bacteria B.subtilis and S.aureus, and against the Gram-negative bacteria E.coli DH5-alpha and K.pneumoniae ATCC 138833. Does not show detectable antibacterial activity when present alone. Has no hemolytic activity in human erythrocytes. The polypeptide is Defensin-1 (Centruroides limpidus (Mexican scorpion)).